The sequence spans 179 residues: Inner membrane-spanning protein YciB (179 aa).

5 consecutive transmembrane segments (helical) span residues 22–42 (IYAA…YSWV), 50–70 (MALI…FFHN), 76–96 (WKVT…QWVM), 121–141 (LAWA…AFWL), and 149–169 (FKVF…GVYI).

It belongs to the YciB family.

It is found in the cell inner membrane. Functionally, plays a role in cell envelope biogenesis, maintenance of cell envelope integrity and membrane homeostasis. The protein is Inner membrane-spanning protein YciB of Escherichia fergusonii (strain ATCC 35469 / DSM 13698 / CCUG 18766 / IAM 14443 / JCM 21226 / LMG 7866 / NBRC 102419 / NCTC 12128 / CDC 0568-73).